The chain runs to 633 residues: 1-deoxy-D-xylulose-5-phosphate synthase (633 aa).

A disordered region spans residues 1–22 (MPTTFHEIPRKRPTTPLLDRAQ). Residues His-87 and 128–130 (GHS) contribute to the thiamine diphosphate site. Asp-159 lines the Mg(2+) pocket. Residues 160 to 161 (GA), Asn-188, Phe-295, and Glu-378 contribute to the thiamine diphosphate site. Asn-188 lines the Mg(2+) pocket.

It belongs to the transketolase family. DXPS subfamily. As to quaternary structure, homodimer. The cofactor is Mg(2+). It depends on thiamine diphosphate as a cofactor.

It carries out the reaction D-glyceraldehyde 3-phosphate + pyruvate + H(+) = 1-deoxy-D-xylulose 5-phosphate + CO2. Its pathway is metabolic intermediate biosynthesis; 1-deoxy-D-xylulose 5-phosphate biosynthesis; 1-deoxy-D-xylulose 5-phosphate from D-glyceraldehyde 3-phosphate and pyruvate: step 1/1. Functionally, catalyzes the acyloin condensation reaction between C atoms 2 and 3 of pyruvate and glyceraldehyde 3-phosphate to yield 1-deoxy-D-xylulose-5-phosphate (DXP). This Pseudomonas fluorescens (strain ATCC BAA-477 / NRRL B-23932 / Pf-5) protein is 1-deoxy-D-xylulose-5-phosphate synthase.